Reading from the N-terminus, the 432-residue chain is 3-phosphoshikimate 1-carboxyvinyltransferase (432 aa).

Positions 22, 23, and 27 each coordinate 3-phosphoshikimate. Lys-22 serves as a coordination point for phosphoenolpyruvate. Phosphoenolpyruvate-binding residues include Gly-96 and Arg-127. 7 residues coordinate 3-phosphoshikimate: Ser-173, Ser-174, Gln-175, Ser-201, Asp-316, Asn-339, and Lys-343. Position 175 (Gln-175) interacts with phosphoenolpyruvate. The active-site Proton acceptor is Asp-316. 3 residues coordinate phosphoenolpyruvate: Arg-347, Arg-391, and Lys-416.

The protein belongs to the EPSP synthase family. As to quaternary structure, monomer.

It localises to the cytoplasm. The enzyme catalyses 3-phosphoshikimate + phosphoenolpyruvate = 5-O-(1-carboxyvinyl)-3-phosphoshikimate + phosphate. It functions in the pathway metabolic intermediate biosynthesis; chorismate biosynthesis; chorismate from D-erythrose 4-phosphate and phosphoenolpyruvate: step 6/7. Catalyzes the transfer of the enolpyruvyl moiety of phosphoenolpyruvate (PEP) to the 5-hydroxyl of shikimate-3-phosphate (S3P) to produce enolpyruvyl shikimate-3-phosphate and inorganic phosphate. The chain is 3-phosphoshikimate 1-carboxyvinyltransferase from Actinobacillus pleuropneumoniae serotype 7 (strain AP76).